The sequence spans 279 residues: Tryptophan synthase alpha chain (279 aa).

Catalysis depends on proton acceptor residues Glu50 and Asp61.

It belongs to the TrpA family. As to quaternary structure, tetramer of two alpha and two beta chains.

The catalysed reaction is (1S,2R)-1-C-(indol-3-yl)glycerol 3-phosphate + L-serine = D-glyceraldehyde 3-phosphate + L-tryptophan + H2O. It functions in the pathway amino-acid biosynthesis; L-tryptophan biosynthesis; L-tryptophan from chorismate: step 5/5. Its function is as follows. The alpha subunit is responsible for the aldol cleavage of indoleglycerol phosphate to indole and glyceraldehyde 3-phosphate. The sequence is that of Tryptophan synthase alpha chain from Brucella ovis (strain ATCC 25840 / 63/290 / NCTC 10512).